Reading from the N-terminus, the 129-residue chain is Small ribosomal subunit protein uS12 (129 aa).

A 3-methylthioaspartic acid modification is found at aspartate 89. The tract at residues 110–129 is disordered; it reads RKQGRSRYGAPRKQVVATKK.

The protein belongs to the universal ribosomal protein uS12 family. Part of the 30S ribosomal subunit. Contacts proteins S8 and S17. May interact with IF1 in the 30S initiation complex.

Its function is as follows. With S4 and S5 plays an important role in translational accuracy. In terms of biological role, interacts with and stabilizes bases of the 16S rRNA that are involved in tRNA selection in the A site and with the mRNA backbone. Located at the interface of the 30S and 50S subunits, it traverses the body of the 30S subunit contacting proteins on the other side and probably holding the rRNA structure together. The combined cluster of proteins S8, S12 and S17 appears to hold together the shoulder and platform of the 30S subunit. This chain is Small ribosomal subunit protein uS12, found in Rickettsia bellii (strain OSU 85-389).